The following is a 36-amino-acid chain: Pancreatic polypeptide (36 aa).

Tyrosine 36 carries the post-translational modification Tyrosine amide.

The protein belongs to the NPY family.

The protein localises to the secreted. In terms of biological role, hormone secreted by pancreatic cells that acts as a regulator of pancreatic and gastrointestinal functions probably by signaling through the G protein-coupled receptor NPY4R2. In Tapirus pinchaque (Mountain tapir), this protein is Pancreatic polypeptide (PPY).